We begin with the raw amino-acid sequence, 444 residues long: Divalent metal cation transporter MntH (444 aa).

11 consecutive transmembrane segments (helical) span residues 31 to 51 (GGHW…VSVG), 68 to 88 (FGYL…VLQG), 115 to 135 (LALW…EVIG), 146 to 166 (IPLT…LLLM), 175 to 195 (AFVM…IALA), 212 to 232 (VVTN…TVMP), 267 to 287 (VALM…AAVF), 303 to 323 (ALLA…VALL), 356 to 376 (LLTR…YGEA), 381 to 401 (LLVL…IPLV), and 413 to 433 (LVAP…IVGL).

The protein belongs to the NRAMP family.

The protein resides in the cell inner membrane. Functionally, h(+)-stimulated, divalent metal cation uptake system. The polypeptide is Divalent metal cation transporter MntH (Xanthomonas campestris pv. campestris (strain ATCC 33913 / DSM 3586 / NCPPB 528 / LMG 568 / P 25)).